Here is a 403-residue protein sequence, read N- to C-terminus: S-adenosylmethionine synthase (403 aa).

H17 contributes to the ATP binding site. Mg(2+) is bound at residue D19. E45 contributes to the K(+) binding site. L-methionine contacts are provided by E58 and Q104. The flexible loop stretch occupies residues 104 to 114; the sequence is QSPDIAQGVDT. ATP contacts are provided by residues 179 to 181, 250 to 251, D259, 265 to 266, A282, and K286; these read DGK, KF, and RK. D259 provides a ligand contact to L-methionine. Position 290 (K290) interacts with L-methionine.

It belongs to the AdoMet synthase family. As to quaternary structure, homotetramer; dimer of dimers. Mg(2+) serves as cofactor. Requires K(+) as cofactor.

The protein localises to the cytoplasm. It catalyses the reaction L-methionine + ATP + H2O = S-adenosyl-L-methionine + phosphate + diphosphate. The protein operates within amino-acid biosynthesis; S-adenosyl-L-methionine biosynthesis; S-adenosyl-L-methionine from L-methionine: step 1/1. Catalyzes the formation of S-adenosylmethionine (AdoMet) from methionine and ATP. The overall synthetic reaction is composed of two sequential steps, AdoMet formation and the subsequent tripolyphosphate hydrolysis which occurs prior to release of AdoMet from the enzyme. The sequence is that of S-adenosylmethionine synthase from Mycobacterium tuberculosis (strain ATCC 25177 / H37Ra).